A 292-amino-acid polypeptide reads, in one-letter code: Protease HtpX homolog (292 aa).

The next 2 helical transmembrane spans lie at 4–24 and 39–59; these read ILLF…VASL and GALL…SLLI. His-144 is a Zn(2+) binding site. Glu-145 is an active-site residue. His-148 lines the Zn(2+) pocket. A run of 2 helical transmembrane segments spans residues 159 to 179 and 199 to 219; these read LIQG…GYAV and VTTI…VAWF. Zn(2+) is bound at residue Glu-224.

It belongs to the peptidase M48B family. The cofactor is Zn(2+).

The protein resides in the cell inner membrane. The protein is Protease HtpX homolog of Verminephrobacter eiseniae (strain EF01-2).